A 545-amino-acid polypeptide reads, in one-letter code: Chaperonin GroEL 2 (545 aa).

ATP-binding positions include 29 to 32 (TLGP), 86 to 90 (DGTTT), glycine 413, 479 to 481 (NAA), and aspartate 495.

Belongs to the chaperonin (HSP60) family. Forms a cylinder of 14 subunits composed of two heptameric rings stacked back-to-back. Interacts with the co-chaperonin GroES.

It is found in the cytoplasm. It carries out the reaction ATP + H2O + a folded polypeptide = ADP + phosphate + an unfolded polypeptide.. Its function is as follows. Together with its co-chaperonin GroES, plays an essential role in assisting protein folding. The GroEL-GroES system forms a nano-cage that allows encapsulation of the non-native substrate proteins and provides a physical environment optimized to promote and accelerate protein folding. In Prochlorococcus marinus (strain MIT 9215), this protein is Chaperonin GroEL 2.